Consider the following 1142-residue polypeptide: Coiled-coil domain-containing protein 40 (1142 aa).

2 disordered regions span residues 1–197 and 251–274; these read MAEP…QVLP and PSTE…AEDE. 2 stretches are compositionally biased toward basic and acidic residues: residues 11-27 and 35-55; these read SHPE…EGNN and PEKD…HPEE. The span at 63–96 shows a compositional bias: acidic residues; sequence AIEEGEVETEGEAAVEGEEEAVSYGDAESEEEYY. The residue at position 252 (serine 252) is a Phosphoserine. The segment covering 265–274 has biased composition (acidic residues); it reads EGSDEEAEDE. Coiled-coil stretches lie at residues 293-319, 349-470, 526-627, 684-950, and 1005-1054; these read AALK…ATKQ, HDRH…QAED, QAKS…LRRK, TSSR…LGQL, and VRKA…LTRL.

The protein belongs to the CCDC40 family.

Its subcellular location is the cytoplasm. The protein resides in the cell projection. It is found in the cilium. Functionally, required for assembly of dynein regulatory complex (DRC) and inner dynein arm (IDA) complexes, which are responsible for ciliary beat regulation, thereby playing a central role in motility in cilia and flagella. Probably acts together with CCDC39 to form a molecular ruler that determines the 96 nanometer (nm) repeat length and arrangements of components in cilia and flagella. Not required for outer dynein arm complexes assembly. Required for axonemal recruitment of CCDC39. This is Coiled-coil domain-containing protein 40 from Homo sapiens (Human).